Consider the following 184-residue polypeptide: Photosystem I assembly protein Ycf4 (184 aa).

2 consecutive transmembrane segments (helical) span residues asparagine 21 to tyrosine 43 and glycine 63 to phenylalanine 85.

It belongs to the Ycf4 family.

It is found in the plastid. It localises to the chloroplast thylakoid membrane. Its function is as follows. Seems to be required for the assembly of the photosystem I complex. The protein is Photosystem I assembly protein Ycf4 of Chaetosphaeridium globosum (Charophycean green alga).